The primary structure comprises 251 residues: Derlin-1 (251 aa).

S2 is modified (N-acetylserine). Topologically, residues 2–15 are cytoplasmic; the sequence is SDIGDWFRSIPAIT. The chain crosses the membrane as a helical span at residues 16–31; that stretch reads RYWFAATVAVPLVGKL. Topologically, residues 32–69 are lumenal; sequence GLISPAYLFLWPEAFLYRFQIWRPITATFYFPVGPGTG. Residues 70–89 traverse the membrane as a helical segment; that stretch reads FLYLVNLYFLYHYSTRLETG. Residues 90–94 are Cytoplasmic-facing; sequence AFDGR. A helical transmembrane segment spans residues 95-115; sequence PADYLFMLLFNWICIVITGLA. At 116 to 122 the chain is on the lumenal side; it reads MDMQLLM. A helical membrane pass occupies residues 123-137; that stretch reads IPLIMSVLYVWAQLN. Topologically, residues 138 to 154 are cytoplasmic; the sequence is RDMIVSFWFGTRFKACY. Residues 155-166 traverse the membrane as a helical segment; sequence LPWVILGFNYII. The Lumenal segment spans residues 167–170; that stretch reads GGSV. Residues 171–189 form a helical membrane-spanning segment; the sequence is INELIGNLVGHLYFFLMFR. Over 190–251 the chain is Cytoplasmic; that stretch reads YPMDLGGRNF…WGQGFRLGDQ (62 aa). Residue S201 is modified to Phosphoserine. Phosphothreonine is present on T202. Phosphoserine is present on S226. Positions 229–251 are disordered; that stretch reads RAADQNGGGGRHNWGQGFRLGDQ. The short motif at 241-248 is the SHP-box element; that stretch reads NWGQGFRL.

It belongs to the derlin family. In terms of assembly, homotetramer. The four subunits of the tetramer are arranged in a twofold symmetry. Forms homo- and heterooligomers with DERL2 and DERL3; binding to DERL3 is poorer than that between DERL2 and DERL3. Interacts (via SHP-box motif) with VCP. Interacts with AMFR, SELENOS, SEL1L, SELENOK and SYVN1, as well as with SEL1L-SYVN1 and VCP-SELENOS protein complexes; this interaction is weaker than that observed between DERL2 and these complexes. Interacts with NGLY1 and YOD1. Does not bind to EDEM1. Interacts with DNAJB9. Interacts with RNF103. Interacts with HM13. Interacts with XBP1 isoform 1 (via luminal/ectodomain domain); the interaction obviates the need for ectodomain shedding prior HM13/SPP-mediated XBP1 isoform 1 cleavage. Interacts with the signal recognition particle/SRP and the SRP receptor; in the process of endoplasmic reticulum stress-induced pre-emptive quality control. May interact with UBXN6. Interacts with ZFAND2B; probably through VCP. Interacts with CCDC47. Interacts with C18orf32. May interact with TRAM1. Forms a complex with SVIP and VCP/p97.

The protein localises to the endoplasmic reticulum membrane. Functional component of endoplasmic reticulum-associated degradation (ERAD) for misfolded lumenal proteins. Forms homotetramers which encircle a large channel traversing the endoplasmic reticulum (ER) membrane. This allows the retrotranslocation of misfolded proteins from the ER into the cytosol where they are ubiquitinated and degraded by the proteasome. The channel has a lateral gate within the membrane which provides direct access to membrane proteins with no need to reenter the ER lumen first. May mediate the interaction between VCP and the misfolded protein. Also involved in endoplasmic reticulum stress-induced pre-emptive quality control, a mechanism that selectively attenuates the translocation of newly synthesized proteins into the endoplasmic reticulum and reroutes them to the cytosol for proteasomal degradation. By controlling the steady-state expression of the IGF1R receptor, indirectly regulates the insulin-like growth factor receptor signaling pathway. The chain is Derlin-1 from Pongo abelii (Sumatran orangutan).